The following is a 202-amino-acid chain: Large ribosomal subunit protein bL9 (202 aa).

The interval 168-202 is disordered; the sequence is DEAGFTEDYDPNAEPGEIPTELQDEAPAAEATDEA. A compositionally biased stretch (low complexity) spans 192–202; the sequence is EAPAAEATDEA.

Belongs to the bacterial ribosomal protein bL9 family.

In terms of biological role, binds to the 23S rRNA. The protein is Large ribosomal subunit protein bL9 of Rhizorhabdus wittichii (strain DSM 6014 / CCUG 31198 / JCM 15750 / NBRC 105917 / EY 4224 / RW1) (Sphingomonas wittichii).